Reading from the N-terminus, the 270-residue chain is 5'-AMP-activated protein kinase subunit beta-1 (270 aa).

Residues 1-44 (MGNTSSERAALDRQGGHKTPRRDSSGGSKDGDRPKILMDSPEDA) form a disordered region. Gly2 carries N-myristoyl glycine lipidation. Residue Thr4 is modified to Phosphothreonine. Ser5 and Ser6 each carry phosphoserine. The span at 9–36 (AALDRQGGHKTPRRDSSGGSKDGDRPKI) shows a compositional bias: basic and acidic residues. Position 19 is a phosphothreonine (Thr19). 2 positions are modified to phosphoserine; by autocatalysis: Ser24 and Ser25. Phosphoserine occurs at positions 40, 96, and 101. Residues 68 to 163 (EVNDKAPAQA…QVKKTDFEVF (96 aa)) are glycogen-binding domain. Ser108 is subject to Phosphoserine; by autocatalysis. Thr148 bears the Phosphothreonine mark. Position 182 is a phosphoserine (Ser182). Lys201 is modified (N6-succinyllysine).

It belongs to the 5'-AMP-activated protein kinase beta subunit family. As to quaternary structure, AMPK is a heterotrimer of an alpha catalytic subunit (PRKAA1 or PRKAA2), a beta (PRKAB1 or PRKAB2) and a gamma non-catalytic subunits (PRKAG1, PRKAG2 or PRKAG3). Interacts with FNIP1 and FNIP2. In terms of processing, phosphorylated when associated with the catalytic subunit (PRKAA1 or PRKAA2). Phosphorylated by ULK1; leading to negatively regulate AMPK activity and suggesting the existence of a regulatory feedback loop between ULK1 and AMPK.

Its function is as follows. Non-catalytic subunit of AMP-activated protein kinase (AMPK), an energy sensor protein kinase that plays a key role in regulating cellular energy metabolism. In response to reduction of intracellular ATP levels, AMPK activates energy-producing pathways and inhibits energy-consuming processes: inhibits protein, carbohydrate and lipid biosynthesis, as well as cell growth and proliferation. AMPK acts via direct phosphorylation of metabolic enzymes, and by longer-term effects via phosphorylation of transcription regulators. Also acts as a regulator of cellular polarity by remodeling the actin cytoskeleton; probably by indirectly activating myosin. Beta non-catalytic subunit acts as a scaffold on which the AMPK complex assembles, via its C-terminus that bridges alpha (PRKAA1 or PRKAA2) and gamma subunits (PRKAG1, PRKAG2 or PRKAG3). This Bos taurus (Bovine) protein is 5'-AMP-activated protein kinase subunit beta-1 (PRKAB1).